The chain runs to 81 residues: Protein PYP1 (81 aa).

Residues Met1–Met25 constitute a chloroplast transit peptide. The segment at Leu27–Gln57 is disordered.

The protein localises to the plastid. It is found in the chloroplast. The protein is Protein PYP1 of Pyropia yezoensis (Susabi-nori).